Reading from the N-terminus, the 123-residue chain is Large ribosomal subunit protein uL29 (123 aa).

This sequence belongs to the universal ribosomal protein uL29 family.

The chain is Large ribosomal subunit protein uL29 (RPL35) from Theileria parva (East coast fever infection agent).